An 82-amino-acid chain; its full sequence is Diptericin-A (82 aa).

2 disordered regions span residues 1–32 (DEKPKLILPTPAPPNLPQLVGGGGGNRKDGFG) and 45–69 (DNGGHSIGVSPGYSQHLPGPYGNSR). Phe-82 is subject to Phenylalanine amide.

Belongs to the attacin/sarcotoxin-2 family.

The protein resides in the secreted. Antimicrobial peptide required to resist Gram-negative bacterial infections, regulated by Dredd. The sequence is that of Diptericin-A from Protophormia terraenovae (Northern blowfly).